Reading from the N-terminus, the 327-residue chain is uncharacterized protein (327 aa).

A compositionally biased stretch (low complexity) spans 1 to 17 (MASMAAAIAASRSAVMS). Residues 1-22 (MASMAAAIAASRSAVMSGNRPL) are disordered. Ala-2 bears the N-acetylalanine mark. Ser-37 carries the phosphoserine modification. Residues 76–113 (GPRAPAPRDPGDSEELTRFPGLRGPTGQKVVRFGDEDL) form a disordered region. Ser-129 is modified (phosphoserine). Polar residues predominate over residues 134–148 (SISALSIQEPSNGTA). A disordered region spans residues 134-299 (SISALSIQEP…PDVRQDDGED (166 aa)). The span at 162-176 (SQALKSSQGSRSSSL) shows a compositional bias: low complexity. Ser-175 carries the phosphoserine modification. Basic and acidic residues-rich tracts occupy residues 182–202 (TRKE…RGEG) and 233–252 (PAPK…RQEQ). Ser-289 is subject to Phosphoserine.

The protein resides in the cytoplasm. This is an uncharacterized protein from Homo sapiens (Human).